The chain runs to 47 residues: Lysis protein for colicin E7 (47 aa).

Residues 1–19 (MKKITGIILLLLAAIILAA) form the signal peptide. Cysteine 20 carries the N-palmitoyl cysteine lipid modification. The S-diacylglycerol cysteine moiety is linked to residue cysteine 20.

It is found in the cell outer membrane. In terms of biological role, lysis proteins are required for both colicin release and partial cell lysis. The chain is Lysis protein for colicin E7 (lys) from Escherichia coli.